Consider the following 467-residue polypeptide: Glutamate--tRNA ligase (467 aa).

A 'HIGH' region motif is present at residues 9–19 (PSPTGFLHIGG). The 'KMSKS' region signature appears at 250-254 (KLSKR). Residue K253 coordinates ATP.

Belongs to the class-I aminoacyl-tRNA synthetase family. Glutamate--tRNA ligase type 1 subfamily. In terms of assembly, monomer.

It localises to the cytoplasm. It carries out the reaction tRNA(Glu) + L-glutamate + ATP = L-glutamyl-tRNA(Glu) + AMP + diphosphate. Functionally, catalyzes the attachment of glutamate to tRNA(Glu) in a two-step reaction: glutamate is first activated by ATP to form Glu-AMP and then transferred to the acceptor end of tRNA(Glu). This is Glutamate--tRNA ligase from Mesomycoplasma hyopneumoniae (strain 232) (Mycoplasma hyopneumoniae).